Consider the following 227-residue polypeptide: MAYPFQLGLQDATSPIMEELTNFHDHTLMIVFLISTLVLYIISLMLTTKLTHTSTMDAQEVETIWTILPAVILILIALPSLRILYMMDEINNPALTVKTMGHQWYWSYEYTDYEDLCFDSYMIPTNDLKPGELRLLEVDNRVVLPMELPIRMLISSEDVLHSWAVPSLGLKTDAIPGRLNQATVSSNRPGLFYGQCSEICGSNHSFMPIVLEMVPLKYFEDWSASMI.

The Mitochondrial intermembrane portion of the chain corresponds to Met1–Ser14. Residues Pro15–Met45 traverse the membrane as a helical segment. At Leu46 to Gln59 the chain is on the mitochondrial matrix side. A helical transmembrane segment spans residues Glu60 to Met87. Topologically, residues Asp88–Ile227 are mitochondrial intermembrane. Positions 161, 196, 198, 200, 204, and 207 each coordinate Cu cation. Position 198 (Glu198) interacts with Mg(2+). Tyr218 is modified (phosphotyrosine).

The protein belongs to the cytochrome c oxidase subunit 2 family. In terms of assembly, component of the cytochrome c oxidase (complex IV, CIV), a multisubunit enzyme composed of 14 subunits. The complex is composed of a catalytic core of 3 subunits MT-CO1, MT-CO2 and MT-CO3, encoded in the mitochondrial DNA, and 11 supernumerary subunits COX4I, COX5A, COX5B, COX6A, COX6B, COX6C, COX7A, COX7B, COX7C, COX8 and NDUFA4, which are encoded in the nuclear genome. The complex exists as a monomer or a dimer and forms supercomplexes (SCs) in the inner mitochondrial membrane with NADH-ubiquinone oxidoreductase (complex I, CI) and ubiquinol-cytochrome c oxidoreductase (cytochrome b-c1 complex, complex III, CIII), resulting in different assemblies (supercomplex SCI(1)III(2)IV(1) and megacomplex MCI(2)III(2)IV(2)). Found in a complex with TMEM177, COA6, COX18, COX20, SCO1 and SCO2. Interacts with TMEM177 in a COX20-dependent manner. Interacts with COX20. Interacts with COX16. Cu cation serves as cofactor.

Its subcellular location is the mitochondrion inner membrane. The catalysed reaction is 4 Fe(II)-[cytochrome c] + O2 + 8 H(+)(in) = 4 Fe(III)-[cytochrome c] + 2 H2O + 4 H(+)(out). In terms of biological role, component of the cytochrome c oxidase, the last enzyme in the mitochondrial electron transport chain which drives oxidative phosphorylation. The respiratory chain contains 3 multisubunit complexes succinate dehydrogenase (complex II, CII), ubiquinol-cytochrome c oxidoreductase (cytochrome b-c1 complex, complex III, CIII) and cytochrome c oxidase (complex IV, CIV), that cooperate to transfer electrons derived from NADH and succinate to molecular oxygen, creating an electrochemical gradient over the inner membrane that drives transmembrane transport and the ATP synthase. Cytochrome c oxidase is the component of the respiratory chain that catalyzes the reduction of oxygen to water. Electrons originating from reduced cytochrome c in the intermembrane space (IMS) are transferred via the dinuclear copper A center (CU(A)) of subunit 2 and heme A of subunit 1 to the active site in subunit 1, a binuclear center (BNC) formed by heme A3 and copper B (CU(B)). The BNC reduces molecular oxygen to 2 water molecules using 4 electrons from cytochrome c in the IMS and 4 protons from the mitochondrial matrix. In Hybomys univittatus (Peter's striped mouse), this protein is Cytochrome c oxidase subunit 2 (MT-CO2).